The primary structure comprises 275 residues: MNTSHYSVLGHTVPYPKVYDPSLLFPISRAVGRTQIGIGVVLPFVGEDRWHAYELSWLDARGKPCVATATFHVPCDSPYLIESKSLKLYLNSFSAEVFNRAEALRLRIAADLSACAGAAVAVEFGLPPVGGGDKEISLDRLNVDIEDYGPPNPDYLSNVAQNFVEEMVEETLTSTLFKSNCPVTGQPDWASVTVRYFGVPIDHEGLLRYFISFRHHAEFHEQCVERIFQDVLQRCAPQCLAVEARYTRRGGLDINPLRTTSEMAWPLSVFRDPRQ.

81 to 83 (IES) serves as a coordination point for substrate. An NADPH-binding site is contributed by 83–84 (SK). The Thioimide intermediate role is filled by Cys-181. The active-site Proton donor is the Asp-188. Residue 220-221 (HE) participates in substrate binding. 249 to 250 (RG) contributes to the NADPH binding site.

Belongs to the GTP cyclohydrolase I family. QueF type 2 subfamily. As to quaternary structure, homodimer.

The protein localises to the cytoplasm. The catalysed reaction is 7-aminomethyl-7-carbaguanine + 2 NADP(+) = 7-cyano-7-deazaguanine + 2 NADPH + 3 H(+). Its pathway is tRNA modification; tRNA-queuosine biosynthesis. Its function is as follows. Catalyzes the NADPH-dependent reduction of 7-cyano-7-deazaguanine (preQ0) to 7-aminomethyl-7-deazaguanine (preQ1). This chain is NADPH-dependent 7-cyano-7-deazaguanine reductase, found in Xylella fastidiosa (strain M12).